The sequence spans 822 residues: Putative endoplasmic reticulum metallopeptidase 1 (822 aa).

Residues 1–14 (MVLVCASSSKCKRN) are Cytoplasmic-facing. The chain crosses the membrane as a helical span at residues 15–35 (TFLQLAMVLFAVVMARIALYF). Residues 36-365 (HNHLDEPLVD…FNSLFFMYSK (330 aa)) lie on the Lumenal side of the membrane. An N-linked (GlcNAc...) asparagine glycan is attached at asparagine 146. Histidine 161 and aspartate 173 together coordinate Zn(2+). The active-site Proton acceptor is glutamate 207. Glutamate 208 and glutamate 234 together coordinate Zn(2+). N-linked (GlcNAc...) asparagine glycosylation is present at asparagine 291. Histidine 307 contributes to the Zn(2+) binding site. Residues 366–384 (LTSKILNTLVGGLGILLTL) traverse the membrane as a helical segment. The Cytoplasmic segment spans residues 385-392 (RGSEGSFT). Residues 393–413 (VALIAQVISIAGIFVIPNIWA) form a helical membrane-spanning segment. Residues 414 to 431 (YILGNVLDCGMSWFRNEY) lie on the Lumenal side of the membrane. Residues 432-452 (WPLFIYLPAIFASLFFTESLF) form a helical membrane-spanning segment. Residues 453–463 (KRSEHLALRAT) lie on the Cytoplasmic side of the membrane. A helical membrane pass occupies residues 464–484 (IFIFSLLTFIPLPSAYLFTII). A topological domain (lumenal) is located at residue aspartate 485. A helical transmembrane segment spans residues 486 to 506 (FFMVFALFLNDKILAKPGTVH). At 507 to 514 (PLTYFIGS) the chain is on the cytoplasmic side. The chain crosses the membrane as a helical span at residues 515-535 (IGAMTVGFESAINLLEIFVPL). Over 536–547 (TGRIGTDKVADN) the chain is Lumenal. A helical transmembrane segment spans residues 548–568 (VVATVCVCGFNIYFPLMSPWI). Topologically, residues 569-575 (QRFRSRC) are cytoplasmic. Residues 576-596 (CFRLGLLFSIFVVGFSSFILA) form a helical membrane-spanning segment. Residues 597 to 822 (KQDTYYDSLH…GVVSGNFKLE (226 aa)) are Lumenal-facing. N-linked (GlcNAc...) asparagine glycans are attached at residues asparagine 617, asparagine 682, asparagine 706, and asparagine 758.

Belongs to the peptidase M28 family. M28B subfamily. Zn(2+) serves as cofactor.

It is found in the endoplasmic reticulum membrane. This chain is Putative endoplasmic reticulum metallopeptidase 1, found in Schizosaccharomyces pombe (strain 972 / ATCC 24843) (Fission yeast).